The sequence spans 234 residues: Coiled-coil domain-containing protein 194 (234 aa).

The signal sequence occupies residues 1–42 (MAEPGPEPGRAWRVLALCGVAVFLAAAAAGGALVAWNLAASA). Disordered regions lie at residues 44–67 (RGPR…PGVD) and 187–234 (VLEA…RARG). Residues 66-163 (VDDLRRRLAE…TRRLDEALRR (98 aa)) are a coiled coil. Positions 187-196 (VLEAEMSPQR) are enriched in low complexity. Residues 197–217 (RVPRPRPRSGSRPRPSPRSRS) show a composition bias toward basic residues.

This is Coiled-coil domain-containing protein 194 from Homo sapiens (Human).